The following is a 47-amino-acid chain: Large ribosomal subunit protein bL34 (47 aa).

Belongs to the bacterial ribosomal protein bL34 family.

The chain is Large ribosomal subunit protein bL34 from Mycobacterium ulcerans (strain Agy99).